The primary structure comprises 203 residues: Cardiotrophin-2 (203 aa).

Positions 1–21 (MSCSLARLCLLTLLSPPLSSA) are cleaved as a signal peptide. N43 is a glycosylation site (N-linked (GlcNAc...) asparagine).

It belongs to the IL-6 superfamily.

The protein localises to the secreted. Functionally, may have an important role in neuronal precursor development and maturation. The sequence is that of Cardiotrophin-2 (CTF2) from Pan troglodytes (Chimpanzee).